The primary structure comprises 99 residues: Aspartyl/glutamyl-tRNA(Asn/Gln) amidotransferase subunit C (99 aa).

Belongs to the GatC family. In terms of assembly, heterotrimer of A, B and C subunits.

The enzyme catalyses L-glutamyl-tRNA(Gln) + L-glutamine + ATP + H2O = L-glutaminyl-tRNA(Gln) + L-glutamate + ADP + phosphate + H(+). It catalyses the reaction L-aspartyl-tRNA(Asn) + L-glutamine + ATP + H2O = L-asparaginyl-tRNA(Asn) + L-glutamate + ADP + phosphate + 2 H(+). Functionally, allows the formation of correctly charged Asn-tRNA(Asn) or Gln-tRNA(Gln) through the transamidation of misacylated Asp-tRNA(Asn) or Glu-tRNA(Gln) in organisms which lack either or both of asparaginyl-tRNA or glutaminyl-tRNA synthetases. The reaction takes place in the presence of glutamine and ATP through an activated phospho-Asp-tRNA(Asn) or phospho-Glu-tRNA(Gln). In Thermobifida fusca (strain YX), this protein is Aspartyl/glutamyl-tRNA(Asn/Gln) amidotransferase subunit C.